Consider the following 157-residue polypeptide: Glutamyl-tRNA(Gln) amidotransferase subunit C, mitochondrial (157 aa).

The protein belongs to the GatC family. As to quaternary structure, subunit of the heterotrimeric GatCAB amidotransferase (AdT) complex, composed of A, B and C subunits.

It is found in the mitochondrion. The enzyme catalyses L-glutamyl-tRNA(Gln) + L-glutamine + ATP + H2O = L-glutaminyl-tRNA(Gln) + L-glutamate + ADP + phosphate + H(+). Its function is as follows. Allows the formation of correctly charged Gln-tRNA(Gln) through the transamidation of misacylated Glu-tRNA(Gln) in the mitochondria. The reaction takes place in the presence of glutamine and ATP through an activated gamma-phospho-Glu-tRNA(Gln). This chain is Glutamyl-tRNA(Gln) amidotransferase subunit C, mitochondrial, found in Drosophila virilis (Fruit fly).